A 376-amino-acid polypeptide reads, in one-letter code: MFIDSVNLTLSSGHGGAGAVSFRREKHVILGGPDGGDGGDGGDVYLIADNNSHTLAAYKGKRALKAQNGEAGSGRRMTGKKGENLELIVPPGTAVYDAQTNELLADLTKESERVLFLKGGKGGLGNVHFKSSINQAPEYAQKGLPEETRDVRLELKLIADVGLVGFPNVGKSTLISTVSNAKPQIANYEFTTLTPKLGLVEVDEYSGFVMADIPGIIEGASDGRGLGLKFLKHIERTKILLYMLDLANHRSLKEQFVTLRGEVEKFSPELAKRDFAIALTRMDAAENLERKVGEFLQILGLSGERSNLIDEAGKAGKNLIYKQDIYEFDDSKPYFVMPISSATNQNITELKFSLLELLKKGKFQMIFAGNLTETRG.

Residues 1–158 (MFIDSVNLTL…RDVRLELKLI (158 aa)) enclose the Obg domain. The 201-residue stretch at 159-359 (ADVGLVGFPN…LKFSLLELLK (201 aa)) folds into the OBG-type G domain. Residues 165–172 (GFPNVGKS), 190–194 (FTTLT), 212–215 (DIPG), 280–283 (TRMD), and 340–342 (SSA) contribute to the GTP site. Serine 172 and threonine 192 together coordinate Mg(2+).

It belongs to the TRAFAC class OBG-HflX-like GTPase superfamily. OBG GTPase family. In terms of assembly, monomer. It depends on Mg(2+) as a cofactor.

It localises to the cytoplasm. An essential GTPase which binds GTP, GDP and possibly (p)ppGpp with moderate affinity, with high nucleotide exchange rates and a fairly low GTP hydrolysis rate. Plays a role in control of the cell cycle, stress response, ribosome biogenesis and in those bacteria that undergo differentiation, in morphogenesis control. The sequence is that of GTPase Obg from Campylobacter curvus (strain 525.92).